A 352-amino-acid chain; its full sequence is Photosystem II D2 protein (352 aa).

Residue Thr-2 is modified to N-acetylthreonine. The residue at position 2 (Thr-2) is a Phosphothreonine. The helical transmembrane segment at 40-60 (TAYLALGGWFTGTTFVTSWYT) threads the bilayer. Position 117 (His-117) interacts with chlorophyll a. The chain crosses the membrane as a helical span at residues 124-140 (GFMLRQFEIARSVKIRP). Gln-129 and Asn-142 together coordinate pheophytin a. Residues 152 to 165 (VFVSVFLIYPLGQS) traverse the membrane as a helical segment. Position 197 (His-197) interacts with chlorophyll a. Residues 207–227 (AALLCAIHGATVENTLFEDGD) traverse the membrane as a helical segment. A plastoquinone contacts are provided by His-214 and Phe-261. Fe cation is bound at residue His-214. Position 268 (His-268) interacts with Fe cation. The chain crosses the membrane as a helical span at residues 278-294 (GLWMSAIGVVGLALNLR).

The protein belongs to the reaction center PufL/M/PsbA/D family. In terms of assembly, PSII is composed of 1 copy each of membrane proteins PsbA, PsbB, PsbC, PsbD, PsbE, PsbF, PsbH, PsbI, PsbJ, PsbK, PsbL, PsbM, PsbT, PsbX, PsbY, PsbZ, Psb30/Ycf12, at least 3 peripheral proteins of the oxygen-evolving complex and a large number of cofactors. It forms dimeric complexes. It depends on The D1/D2 heterodimer binds P680, chlorophylls that are the primary electron donor of PSII, and subsequent electron acceptors. It shares a non-heme iron and each subunit binds pheophytin, quinone, additional chlorophylls, carotenoids and lipids. There is also a Cl(-1) ion associated with D1 and D2, which is required for oxygen evolution. The PSII complex binds additional chlorophylls, carotenoids and specific lipids. as a cofactor.

It localises to the plastid. The protein resides in the chloroplast thylakoid membrane. It carries out the reaction 2 a plastoquinone + 4 hnu + 2 H2O = 2 a plastoquinol + O2. In terms of biological role, photosystem II (PSII) is a light-driven water:plastoquinone oxidoreductase that uses light energy to abstract electrons from H(2)O, generating O(2) and a proton gradient subsequently used for ATP formation. It consists of a core antenna complex that captures photons, and an electron transfer chain that converts photonic excitation into a charge separation. The D1/D2 (PsbA/PsbD) reaction center heterodimer binds P680, the primary electron donor of PSII as well as several subsequent electron acceptors. D2 is needed for assembly of a stable PSII complex. This chain is Photosystem II D2 protein, found in Chlorella vulgaris (Green alga).